A 238-amino-acid chain; its full sequence is MRPNNRENNQPRQIKITRNYTKHAEGSVLVEFGDTKVLCTATVEDAVPRFLKGQGQGWVTAEYGMLPRSTHSRMQREAAKGKQGGRTMEIQRLIARSLRAMVDLKALGERAITLDCDVIQADGGTRTASITGAAVALCDAINSLIENGTLKTNPIKGLVSAISVGIVDGQAVCDLEYVEDSAAETDMNVVMMEDGRMIEVQGTAEGEPFSHEELLTLLDLAKQGCNQIFIAQREALGL.

Residues Arg-86 and 124 to 126 (GTR) each bind phosphate.

This sequence belongs to the RNase PH family. Homohexameric ring arranged as a trimer of dimers.

It carries out the reaction tRNA(n+1) + phosphate = tRNA(n) + a ribonucleoside 5'-diphosphate. Its function is as follows. Phosphorolytic 3'-5' exoribonuclease that plays an important role in tRNA 3'-end maturation. Removes nucleotide residues following the 3'-CCA terminus of tRNAs; can also add nucleotides to the ends of RNA molecules by using nucleoside diphosphates as substrates, but this may not be physiologically important. Probably plays a role in initiation of 16S rRNA degradation (leading to ribosome degradation) during starvation. The sequence is that of Ribonuclease PH from Haemophilus influenzae (strain PittEE).